The primary structure comprises 481 residues: 2-succinylbenzoate--CoA ligase (481 aa).

This sequence belongs to the ATP-dependent AMP-binding enzyme family. MenE subfamily.

The enzyme catalyses 2-succinylbenzoate + ATP + CoA = 2-succinylbenzoyl-CoA + AMP + diphosphate. It functions in the pathway quinol/quinone metabolism; 1,4-dihydroxy-2-naphthoate biosynthesis; 1,4-dihydroxy-2-naphthoate from chorismate: step 5/7. It participates in quinol/quinone metabolism; menaquinone biosynthesis. Functionally, converts 2-succinylbenzoate (OSB) to 2-succinylbenzoyl-CoA (OSB-CoA). This is 2-succinylbenzoate--CoA ligase from Bacillus cytotoxicus (strain DSM 22905 / CIP 110041 / 391-98 / NVH 391-98).